A 143-amino-acid chain; its full sequence is Large ribosomal subunit protein uL11 (143 aa).

Belongs to the universal ribosomal protein uL11 family. As to quaternary structure, part of the ribosomal stalk of the 50S ribosomal subunit. Interacts with L10 and the large rRNA to form the base of the stalk. L10 forms an elongated spine to which L12 dimers bind in a sequential fashion forming a multimeric L10(L12)X complex. In terms of processing, one or more lysine residues are methylated.

Forms part of the ribosomal stalk which helps the ribosome interact with GTP-bound translation factors. The chain is Large ribosomal subunit protein uL11 from Acidovorax ebreus (strain TPSY) (Diaphorobacter sp. (strain TPSY)).